Consider the following 330-residue polypeptide: Glycerol-3-phosphate dehydrogenase [NAD(P)+] (330 aa).

NADPH-binding residues include Ser-10, Trp-11, Arg-31, and Lys-104. Positions 104, 131, and 133 each coordinate sn-glycerol 3-phosphate. An NADPH-binding site is contributed by Ala-135. The sn-glycerol 3-phosphate site is built by Lys-186, Asp-239, Ser-249, Arg-250, and Asn-251. Lys-186 (proton acceptor) is an active-site residue. Position 250 (Arg-250) interacts with NADPH. NADPH-binding residues include Val-274 and Glu-276.

It belongs to the NAD-dependent glycerol-3-phosphate dehydrogenase family.

The protein localises to the cytoplasm. It carries out the reaction sn-glycerol 3-phosphate + NAD(+) = dihydroxyacetone phosphate + NADH + H(+). The enzyme catalyses sn-glycerol 3-phosphate + NADP(+) = dihydroxyacetone phosphate + NADPH + H(+). It functions in the pathway membrane lipid metabolism; glycerophospholipid metabolism. In terms of biological role, catalyzes the reduction of the glycolytic intermediate dihydroxyacetone phosphate (DHAP) to sn-glycerol 3-phosphate (G3P), the key precursor for phospholipid synthesis. This Thermoanaerobacter sp. (strain X514) protein is Glycerol-3-phosphate dehydrogenase [NAD(P)+].